Consider the following 459-residue polypeptide: Cysteine--tRNA ligase (459 aa).

Cys-27 provides a ligand contact to Zn(2+). The 'HIGH' region motif lies at 29 to 39 (PTVYNFVHIGN). Residues Cys-211, His-236, and Glu-240 each contribute to the Zn(2+) site. The short motif at 269-273 (KMSKS) is the 'KMSKS' region element. Position 272 (Lys-272) interacts with ATP.

Belongs to the class-I aminoacyl-tRNA synthetase family. As to quaternary structure, monomer. It depends on Zn(2+) as a cofactor.

It localises to the cytoplasm. It carries out the reaction tRNA(Cys) + L-cysteine + ATP = L-cysteinyl-tRNA(Cys) + AMP + diphosphate. In Ehrlichia canis (strain Jake), this protein is Cysteine--tRNA ligase.